A 260-amino-acid polypeptide reads, in one-letter code: 3'-5' ssDNA/RNA exonuclease TatD (260 aa).

Residues Glu91, His127, and His152 each coordinate a divalent metal cation.

This sequence belongs to the metallo-dependent hydrolases superfamily. TatD-type hydrolase family. TatD subfamily. As to quaternary structure, monomer. Mg(2+) serves as cofactor.

It is found in the cytoplasm. Its function is as follows. 3'-5' exonuclease that prefers single-stranded DNA and RNA. May play a role in the H(2)O(2)-induced DNA damage repair. The protein is 3'-5' ssDNA/RNA exonuclease TatD of Enterobacter lignolyticus (strain SCF1).